We begin with the raw amino-acid sequence, 310 residues long: Polyprenyl transferase ntnF (310 aa).

8 helical membrane passes run 30–50 (HTPEGLSTASIGWLALFFYAI), 63–83 (FLGIFACYQITHGVFCMWNDI), 110–130 (AMVAFIIGLALSLGVTYAMLG), 154–174 (IWAPQAVLGLTMAACVLPPWV), 185–205 (LPASLFGAIFSWLVYLDLIYA), 230–250 (ACLTVLGALQIAFFAVAAFEA), 255–275 (FLWVFGIAVWAISVPWSILSL), and 286–306 (IFLVNAILGIYLAAVSGTDVW).

Belongs to the UbiA prenyltransferase family. Requires Mg(2+) as cofactor.

The protein localises to the membrane. It participates in secondary metabolite biosynthesis; terpenoid biosynthesis. Its function is as follows. olyprenyl transferase; part of the gene cluster that mediates the biosynthesis of the meroterpenoids nectripenoids A and B, as well as cochliquninone D and isocochliquninone E. The pathway probably begins with the HR-PKS ntnH that catalyzes two chain-extension steps to form a reduced triketide, which then primes the SAT domain in the NR-PKS ntnG to initiate three more cycles of extension to give a linear hexaketide corresponding to the polyketide part of nectripenoids. The FAD-dependent monooxygenase ntnJ then performs an oxidative decarboxylation at C11 of the ntnH/ntnG product, via an electrophilic aromatic hydroxylation with concomitant ipso-decarboxylation. The membrane-bound polyprenyl transferase ntnF then introduces a farnesyl group before the FAD-dependent monooxygenase ntnK functions as the first epoxidase on terminal C12'-C13' olefin, followed by a second epoxidation on C7'-C8' catalyzed by ntnA. The terpene cyclase/mutase ntnI then initiates the sequential tricyclic ring formation through protonation of the terminal epoxide and catalyzes the regioselective and stereoselective 6/6/6-tricyclic ring formation. The cytochrome P450 monooxygenase ntnM may then hydroxylate C1'. The sequence is that of Polyprenyl transferase ntnF from Nectria sp.